A 215-amino-acid polypeptide reads, in one-letter code: 3-demethoxyubiquinol 3-hydroxylase (215 aa).

Fe cation is bound by residues Glu-64, Glu-94, His-97, Glu-146, Glu-178, and His-181.

This sequence belongs to the COQ7 family. Fe cation serves as cofactor.

Its subcellular location is the cell membrane. The enzyme catalyses a 5-methoxy-2-methyl-3-(all-trans-polyprenyl)benzene-1,4-diol + AH2 + O2 = a 3-demethylubiquinol + A + H2O. The protein operates within cofactor biosynthesis; ubiquinone biosynthesis. Its function is as follows. Catalyzes the hydroxylation of 2-nonaprenyl-3-methyl-6-methoxy-1,4-benzoquinol during ubiquinone biosynthesis. The protein is 3-demethoxyubiquinol 3-hydroxylase of Ectopseudomonas mendocina (strain ymp) (Pseudomonas mendocina).